We begin with the raw amino-acid sequence, 342 residues long: UHRF1-like protein (342 aa).

The segment at 41–149 is disordered; that stretch reads SEATTLATPS…SHPGSEEEDI (109 aa). Over residues 42-59 the composition is skewed to polar residues; sequence EATTLATPSNLKTAGNQR. Residues 74-90 are compositionally biased toward basic and acidic residues; that stretch reads NRSDSPRKRPTKDREDL. The span at 115-141 shows a compositional bias: polar residues; the sequence is TREQVTFNSDRDTPNTPSRQIKSTHSH. Residues 168–322 enclose the YDG domain; sequence GHIPGIGVGK…LMVCRYAFKR (155 aa). A DNA-binding site is contributed by Asp-218. Residues 236–257 form a disordered region; sequence KGTKQNPKNLRTAPQTSHQSFD. A compositionally biased stretch (polar residues) spans 238-257; that stretch reads TKQNPKNLRTAPQTSHQSFD.

The protein resides in the nucleus. Functionally, involved in the maintenance of DNA methylation. Binds hemimethylated DNA. The chain is UHRF1-like protein from Cryptococcus neoformans var. grubii serotype A (strain H99 / ATCC 208821 / CBS 10515 / FGSC 9487) (Filobasidiella neoformans var. grubii).